A 415-amino-acid chain; its full sequence is Polyketide biosynthesis malonyl-ACP decarboxylase PksF (415 aa).

The Ketosynthase family 3 (KS3) domain occupies 6–407; sequence LPEVVVTGVG…GMNTAVCIQN (402 aa).

It belongs to the thiolase-like superfamily. Beta-ketoacyl-ACP synthases family.

The protein localises to the cytoplasm. The catalysed reaction is malonyl-[ACP] + H(+) = acetyl-[ACP] + CO2. It functions in the pathway antibiotic biosynthesis; bacillaene biosynthesis. Functionally, involved in some intermediate steps for the synthesis of the antibiotic polyketide bacillaene which is involved in secondary metabolism. It decarboxylates selectively the malonyl group attached on the acyl-carrier-protein AcpK (Mal-AcpK). This is Polyketide biosynthesis malonyl-ACP decarboxylase PksF (pksF) from Bacillus subtilis (strain 168).